Here is a 212-residue protein sequence, read N- to C-terminus: Ependymin (212 aa).

A signal peptide spans 1-20; that stretch reads MRLTGLLCVALWSASAVVLA. Residues asparagine 69, asparagine 92, and asparagine 112 are each glycosylated (N-linked (GlcNAc...) asparagine).

This sequence belongs to the ependymin family. In terms of assembly, forms disulfide-linked dimers. Binds calcium through the terminal sialic acids. As to expression, EPDs are synthesized in the meninx and secreted in the cerebrospinal fluid.

The protein resides in the secreted. Functionally, may play a role in neural plasticity. May be involved during axon regeneration. The polypeptide is Ependymin (epd) (Clupea harengus (Atlantic herring)).